A 444-amino-acid chain; its full sequence is Acyl-CoA (8-3)-desaturase (444 aa).

M1 carries the N-acetylmethionine modification. The Cytoplasmic segment spans residues M1 to Q121. The region spanning P17–S94 is the Cytochrome b5 heme-binding domain. A helical membrane pass occupies residues M122–L142. Topologically, residues D143–A146 are lumenal. The helical transmembrane segment at W147–L167 threads the bilayer. The Cytoplasmic segment spans residues T168 to F267. A Histidine box-1 motif is present at residues H179–H183. Positions H216–H220 match the Histidine box-2 motif. Residues L268–I288 form a helical membrane-spanning segment. Residues Q289–R305 lie on the Lumenal side of the membrane. Residues L306–V326 form a helical membrane-spanning segment. The Cytoplasmic segment spans residues R327 to Q444. A Histidine box-3 motif is present at residues Q382–H386.

Belongs to the fatty acid desaturase type 1 family. Widely expressed. Expressed in brain, liver and thymus (at protein level). Isoform 1 seems to be more abundant than isoform 2. Expression of isoform 2 is very low in spleen and not detectable in skeletal muscle.

The protein localises to the endoplasmic reticulum membrane. It is found in the mitochondrion. The enzyme catalyses (8Z,11Z,14Z)-eicosatrienoyl-CoA + 2 Fe(II)-[cytochrome b5] + O2 + 2 H(+) = (5Z,8Z,11Z,14Z)-eicosatetraenoyl-CoA + 2 Fe(III)-[cytochrome b5] + 2 H2O. It carries out the reaction (8Z,11Z,14Z,17Z)-eicosatetraenoyl-CoA + 2 Fe(II)-[cytochrome b5] + O2 + 2 H(+) = (5Z,8Z,11Z,14Z,17Z)-eicosapentaenoyl-CoA + 2 Fe(III)-[cytochrome b5] + 2 H2O. It catalyses the reaction (11E)-octadecenoyl-CoA + 2 Fe(II)-[cytochrome b5] + O2 + 2 H(+) = (5Z,11E)-octadecadienoyl-CoA + 2 Fe(III)-[cytochrome b5] + 2 H2O. It functions in the pathway lipid metabolism; polyunsaturated fatty acid biosynthesis. Acts as a front-end fatty acyl-coenzyme A (CoA) desaturase that introduces a cis double bond at carbon 5 located between a preexisting double bond and the carboxyl end of the fatty acyl chain. Involved in biosynthesis of highly unsaturated fatty acids (HUFA) from the essential polyunsaturated fatty acids (PUFA) linoleic acid (LA) (18:2n-6) and alpha-linolenic acid (ALA) (18:3n-3) precursors. Specifically, desaturates dihomo-gamma-linoleoate (DGLA) (20:3n-6) and eicosatetraenoate (ETA) (20:4n-3) to generate arachidonate (AA) (20:4n-6) and eicosapentaenoate (EPA) (20:5n-3), respectively. As a rate limiting enzyme for DGLA (20:3n-6) and AA (20:4n-6)-derived eicosanoid biosynthesis, controls the metabolism of inflammatory lipids like prostaglandin E2, critical for efficient acute inflammatory response and maintenance of epithelium homeostasis. Contributes to membrane phospholipid biosynthesis by providing AA (20:4n-6) as a major acyl chain esterified into phospholipids. In particular, regulates phosphatidylinositol-4,5-bisphosphate levels, modulating inflammatory cytokine production in T-cells. Also desaturates (11E)-octadecenoate (trans-vaccenoate)(18:1n-9), a metabolite in the biohydrogenation pathway of LA (18:2n-6). Functionally, does not exhibit any catalytic activity toward 20:3n-6, but it may enhance FADS2 activity. This Papio anubis (Olive baboon) protein is Acyl-CoA (8-3)-desaturase.